The sequence spans 312 residues: DDRGK domain-containing protein 1 (312 aa).

Over 1–2 the chain is Lumenal; it reads ME. Residues 3–23 form a helical membrane-spanning segment; the sequence is LIILVGIAIALLVVIITLYLL. Residues 24 to 312 lie on the Cytoplasmic side of the membrane; the sequence is QKKNAAPETK…ISAGGEEASS (289 aa). The interval 30–163 is disordered; the sequence is PETKPAAAPQ…KQQEDLEAEV (134 aa). Residues 52–85 are compositionally biased toward low complexity; sequence RRAQIARNQRNRLRQNAPAAPAGQVAPAAGAPAA. Residues 90–99 are compositionally biased toward acidic residues; it reads DHEDEGQVDA. Residues 110–163 show a composition bias toward basic and acidic residues; sequence LDEKMGAKKRAKMEAKEQKRLQREQELHDREQRKVKEAKEEAERKQQEDLEAEV.

This sequence belongs to the DDRGK1 family. In terms of assembly, interacts with Atg9; the interaction is transient.

The protein localises to the endoplasmic reticulum membrane. In terms of biological role, substrate adapter for ufmylation, the covalent attachment of the ubiquitin-like modifier UFM1 to substrate proteins. Required for ufmylation of Atg9; protects the nervous system during aging, possibly by stabilizing Atg9 and supporting its function. This is DDRGK domain-containing protein 1 from Drosophila erecta (Fruit fly).